Reading from the N-terminus, the 552-residue chain is 5'-AMP-activated protein kinase catalytic subunit alpha-2 (552 aa).

Positions 16–268 constitute a Protein kinase domain; the sequence is YVLGDTLGVG…IKDIREHEWF (253 aa). ATP is bound by residues 22 to 30 and Lys-45; that span reads LGVGTFGKV. Residue Asp-139 is the Proton acceptor of the active site. Thr-172 is subject to Phosphothreonine; by LKB1 and CaMKK2. Thr-258 is modified (phosphothreonine). The AIS stretch occupies residues 291-376; sequence EAVKEVCEKF…PERMPPLIAD (86 aa). Ser-377 bears the Phosphoserine mark. The disordered stretch occupies residues 477 to 521; sequence VEQRSGSSTPQRSCSAAGLHRPRSSFDSTTAESHSLSGSLTGSLT. Positions 480–490 are enriched in polar residues; the sequence is RSGSSTPQRSC. Ser-491 is modified (phosphoserine). Over residues 501–510 the composition is skewed to polar residues; that stretch reads SFDSTTAESH. Positions 511–521 are enriched in low complexity; the sequence is SLSGSLTGSLT.

It belongs to the protein kinase superfamily. CAMK Ser/Thr protein kinase family. SNF1 subfamily. AMPK is a heterotrimer of an alpha catalytic subunit (PRKAA1 or PRKAA2), a beta (PRKAB1 or PRKAB2) and a gamma non-catalytic subunits (PRKAG1, PRKAG2 or PRKAG3). Interacts with FNIP1 and FNIP2. Associates with internalized insulin receptor/INSR complexes on Golgi/endosomal membranes; PRKAA2/AMPK2 together with ATIC and HACD3/PTPLAD1 is proposed to be part of a signaling network regulating INSR autophosphorylation and endocytosis. Interacts with ARF6. The phosphorylated form at Thr-172 mediated by CamKK2 interacts with ACSS2. Requires Mg(2+) as cofactor. Post-translationally, ubiquitinated. In terms of processing, phosphorylated at Thr-172 by STK11/LKB1 in complex with STE20-related adapter-alpha (STRADA) pseudo kinase and CAB39. Also phosphorylated at Thr-172 by CAMKK2; triggered by a rise in intracellular calcium ions, without detectable changes in the AMP/ATP ratio. CAMKK1 can also phosphorylate Thr-172, but at much lower level. Dephosphorylated by protein phosphatase 2A and 2C (PP2A and PP2C). Phosphorylated by ULK1; leading to negatively regulate AMPK activity and suggesting the existence of a regulatory feedback loop between ULK1 and AMPK. Dephosphorylated by PPM1A and PPM1B at Thr-172 (mediated by STK11/LKB1).

Its subcellular location is the cytoplasm. It is found in the nucleus. The catalysed reaction is L-seryl-[protein] + ATP = O-phospho-L-seryl-[protein] + ADP + H(+). It catalyses the reaction L-threonyl-[protein] + ATP = O-phospho-L-threonyl-[protein] + ADP + H(+). The enzyme catalyses L-seryl-[acetyl-CoA carboxylase] + ATP = O-phospho-L-seryl-[acetyl-CoA carboxylase] + ADP + H(+). It carries out the reaction L-seryl-[3-hydroxy-3-methylglutaryl-coenzyme A reductase] + ATP = O-phospho-L-seryl-[3-hydroxy-3-methylglutaryl-coenzyme A reductase] + ADP + H(+). Activated by phosphorylation on Thr-172. Binding of AMP to non-catalytic gamma subunit (PRKAG1, PRKAG2 or PRKAG3) results in allosteric activation, inducing phosphorylation on Thr-172. AMP-binding to gamma subunit also sustains activity by preventing dephosphorylation of Thr-172. ADP also stimulates Thr-172 phosphorylation, without stimulating already phosphorylated AMPK. ATP promotes dephosphorylation of Thr-172, rendering the enzyme inactive. Under physiological conditions AMPK mainly exists in its inactive form in complex with ATP, which is much more abundant than AMP. AMPK is activated by antihyperglycemic drug metformin, a drug prescribed to patients with type 2 diabetes: in vivo, metformin seems to mainly inhibit liver gluconeogenesis. However, metformin can be used to activate AMPK in muscle and other cells in culture or ex vivo. Selectively inhibited by compound C (6-[4-(2-Piperidin-1-yl-ethoxy)-phenyl)]-3-pyridin-4-yl-pyyrazolo[1,5-a] pyrimidine. Activated by resveratrol, a natural polyphenol present in red wine, and S17834, a synthetic polyphenol. Salicylate/aspirin directly activates kinase activity, primarily by inhibiting Thr-172 dephosphorylation. Catalytic subunit of AMP-activated protein kinase (AMPK), an energy sensor protein kinase that plays a key role in regulating cellular energy metabolism. In response to reduction of intracellular ATP levels, AMPK activates energy-producing pathways and inhibits energy-consuming processes: inhibits protein, carbohydrate and lipid biosynthesis, as well as cell growth and proliferation. AMPK acts via direct phosphorylation of metabolic enzymes, and by longer-term effects via phosphorylation of transcription regulators. Regulates lipid synthesis by phosphorylating and inactivating lipid metabolic enzymes such as ACACA, ACACB, GYS1, HMGCR and LIPE; regulates fatty acid and cholesterol synthesis by phosphorylating acetyl-CoA carboxylase (ACACA and ACACB) and hormone-sensitive lipase (LIPE) enzymes, respectively. Promotes lipolysis of lipid droplets by mediating phosphorylation of isoform 1 of CHKA (CHKalpha2). Regulates insulin-signaling and glycolysis by phosphorylating IRS1, PFKFB2 and PFKFB3. Involved in insulin receptor/INSR internalization. AMPK stimulates glucose uptake in muscle by increasing the translocation of the glucose transporter SLC2A4/GLUT4 to the plasma membrane, possibly by mediating phosphorylation of TBC1D4/AS160. Regulates transcription and chromatin structure by phosphorylating transcription regulators involved in energy metabolism such as CRTC2/TORC2, FOXO3, histone H2B, HDAC5, MEF2C, MLXIPL/ChREBP, EP300, HNF4A, p53/TP53, SREBF1, SREBF2 and PPARGC1A. Acts as a key regulator of glucose homeostasis in liver by phosphorylating CRTC2/TORC2, leading to CRTC2/TORC2 sequestration in the cytoplasm. In response to stress, phosphorylates 'Ser-36' of histone H2B (H2BS36ph), leading to promote transcription. Acts as a key regulator of cell growth and proliferation by phosphorylating FNIP1, TSC2, RPTOR, WDR24 and ATG1/ULK1: in response to nutrient limitation, negatively regulates the mTORC1 complex by phosphorylating RPTOR component of the mTORC1 complex and by phosphorylating and activating TSC2. Also phosphorylates and inhibits GATOR2 subunit WDR24 in response to nutrient limitation, leading to suppress glucose-mediated mTORC1 activation. In response to energetic stress, phosphorylates FNIP1, inactivating the non-canonical mTORC1 signaling, thereby promoting nuclear translocation of TFEB and TFE3, and inducing transcription of lysosomal or autophagy genes. In response to nutrient limitation, promotes autophagy by phosphorylating and activating ATG1/ULK1. In that process, it also activates WDR45/WIPI4. Phosphorylates CASP6, thereby preventing its autoprocessing and subsequent activation. AMPK also acts as a regulator of circadian rhythm by mediating phosphorylation of CRY1, leading to destabilize it. May regulate the Wnt signaling pathway by phosphorylating CTNNB1, leading to stabilize it. Also acts as a regulator of cellular polarity by remodeling the actin cytoskeleton; probably by indirectly activating myosin. Also phosphorylates CFTR, EEF2K, KLC1, NOS3 and SLC12A1. Plays an important role in the differential regulation of pro-autophagy (composed of PIK3C3, BECN1, PIK3R4 and UVRAG or ATG14) and non-autophagy (composed of PIK3C3, BECN1 and PIK3R4) complexes, in response to glucose starvation. Can inhibit the non-autophagy complex by phosphorylating PIK3C3 and can activate the pro-autophagy complex by phosphorylating BECN1. Upon glucose starvation, promotes ARF6 activation in a kinase-independent manner leading to cell migration. Upon glucose deprivation mediates the phosphorylation of ACSS2 at 'Ser-659', which exposes the nuclear localization signal of ACSS2, required for its interaction with KPNA1 and nuclear translocation. Upon stress, regulates mitochondrial fragmentation through phosphorylation of MTFR1L. The protein is 5'-AMP-activated protein kinase catalytic subunit alpha-2 of Homo sapiens (Human).